Reading from the N-terminus, the 96-residue chain is Ubiquitin-like protein NEDD8-like protein 1 (96 aa).

Residues 75–96 form a disordered region; the sequence is SQSDNSEKSEKSGKSEKDCILM. The segment covering 79 to 96 has biased composition (basic and acidic residues); it reads NSEKSEKSGKSEKDCILM.

Belongs to the ubiquitin family.

The polypeptide is Ubiquitin-like protein NEDD8-like protein 1 (nedd8l1) (Dictyostelium discoideum (Social amoeba)).